A 360-amino-acid polypeptide reads, in one-letter code: Phospho-N-acetylmuramoyl-pentapeptide-transferase (360 aa).

The next 10 membrane-spanning stretches (helical) occupy residues 26–46 (AIVS…RMIA), 72–92 (PTMG…LWAY), 94–114 (SNPY…IGFV), 132–152 (WKYF…YLAG), 168–188 (VMPQ…VGTG), 199–219 (GLAI…AWAT), 236–256 (AGEL…FLWF), 263–283 (VFMG…IAVL), 288–308 (FLLV…ILQV), and 338–358 (VIVR…ATLK).

Belongs to the glycosyltransferase 4 family. MraY subfamily. Mg(2+) serves as cofactor.

The protein resides in the cell inner membrane. It catalyses the reaction UDP-N-acetyl-alpha-D-muramoyl-L-alanyl-gamma-D-glutamyl-meso-2,6-diaminopimeloyl-D-alanyl-D-alanine + di-trans,octa-cis-undecaprenyl phosphate = di-trans,octa-cis-undecaprenyl diphospho-N-acetyl-alpha-D-muramoyl-L-alanyl-D-glutamyl-meso-2,6-diaminopimeloyl-D-alanyl-D-alanine + UMP. It participates in cell wall biogenesis; peptidoglycan biosynthesis. Catalyzes the initial step of the lipid cycle reactions in the biosynthesis of the cell wall peptidoglycan: transfers peptidoglycan precursor phospho-MurNAc-pentapeptide from UDP-MurNAc-pentapeptide onto the lipid carrier undecaprenyl phosphate, yielding undecaprenyl-pyrophosphoryl-MurNAc-pentapeptide, known as lipid I. The protein is Phospho-N-acetylmuramoyl-pentapeptide-transferase of Citrobacter koseri (strain ATCC BAA-895 / CDC 4225-83 / SGSC4696).